A 27-amino-acid chain; its full sequence is Alpha-amylase/trypsin inhibitor CM17 (27 aa).

It belongs to the protease inhibitor I6 (cereal trypsin/alpha-amylase inhibitor) family. In terms of tissue distribution, developing endosperm.

It is found in the secreted. Its function is as follows. Alpha-amylase/trypsin inhibitor. It could be involved in insect defense mechanisms. The protein is Alpha-amylase/trypsin inhibitor CM17 of Triticum aestivum (Wheat).